The sequence spans 729 residues: Fatty acid oxidation complex subunit alpha (729 aa).

The segment at methionine 1–lysine 189 is enoyl-CoA hydratase/isomerase. Aspartate 296 contributes to the substrate binding site. Residues glutamate 311 to alanine 729 form a 3-hydroxyacyl-CoA dehydrogenase region. Residues methionine 324, aspartate 343, valine 400–glutamate 402, lysine 407, and serine 429 each bind NAD(+). Catalysis depends on histidine 450, which acts as the For 3-hydroxyacyl-CoA dehydrogenase activity. Position 453 (asparagine 453) interacts with NAD(+). Residues asparagine 500 and tyrosine 660 each coordinate substrate. Residues arginine 708–alanine 729 form a disordered region.

In the N-terminal section; belongs to the enoyl-CoA hydratase/isomerase family. The protein in the C-terminal section; belongs to the 3-hydroxyacyl-CoA dehydrogenase family. As to quaternary structure, heterotetramer of two alpha chains (FadB) and two beta chains (FadA).

It catalyses the reaction a (3S)-3-hydroxyacyl-CoA + NAD(+) = a 3-oxoacyl-CoA + NADH + H(+). The catalysed reaction is a (3S)-3-hydroxyacyl-CoA = a (2E)-enoyl-CoA + H2O. It carries out the reaction a 4-saturated-(3S)-3-hydroxyacyl-CoA = a (3E)-enoyl-CoA + H2O. The enzyme catalyses (3S)-3-hydroxybutanoyl-CoA = (3R)-3-hydroxybutanoyl-CoA. It catalyses the reaction a (3Z)-enoyl-CoA = a 4-saturated (2E)-enoyl-CoA. The catalysed reaction is a (3E)-enoyl-CoA = a 4-saturated (2E)-enoyl-CoA. Its pathway is lipid metabolism; fatty acid beta-oxidation. Functionally, involved in the aerobic and anaerobic degradation of long-chain fatty acids via beta-oxidation cycle. Catalyzes the formation of 3-oxoacyl-CoA from enoyl-CoA via L-3-hydroxyacyl-CoA. It can also use D-3-hydroxyacyl-CoA and cis-3-enoyl-CoA as substrate. The polypeptide is Fatty acid oxidation complex subunit alpha (Salmonella choleraesuis (strain SC-B67)).